We begin with the raw amino-acid sequence, 383 residues long: MRNWLLPEYIADILPATARQVESAKAAMLEGFRVAGYELVLPPLIEYIDSLVSEGDDTLDLKTFKLDDQLSGRQLGLRADITPQVARIDAHLLGERTGVTRLCYAGSVVHSRPSGLTSSREPLQVGAELYGYAGIEADQEIIELMLATLEKAGVKKLRLDVGHIAIYRGLAAAAGLSPEVSRELFGLLQNKDAAGIAARVAGVAEPYKSAFLALPELYGPAAVLEKARTRLPSLPEVELGLMQLSAIARAMEGRVELSFDLAELRGDFYHTGLMFAAYAPGWSDAIARGGRYDNVGRRFGRARPATGFSLDLRDLLRILPERDPSRGIRVSARHLPAAAAEVSRLRAEGEMVVVDYLGESAAALNCDRELVPAADGWQLAPFH.

Belongs to the class-II aminoacyl-tRNA synthetase family. HisZ subfamily. In terms of assembly, heteromultimer composed of HisG and HisZ subunits.

It is found in the cytoplasm. The protein operates within amino-acid biosynthesis; L-histidine biosynthesis; L-histidine from 5-phospho-alpha-D-ribose 1-diphosphate: step 1/9. Required for the first step of histidine biosynthesis. May allow the feedback regulation of ATP phosphoribosyltransferase activity by histidine. In Chromobacterium violaceum (strain ATCC 12472 / DSM 30191 / JCM 1249 / CCUG 213 / NBRC 12614 / NCIMB 9131 / NCTC 9757 / MK), this protein is ATP phosphoribosyltransferase regulatory subunit.